Reading from the N-terminus, the 572-residue chain is 2-isopropylmalate synthase (572 aa).

The Pyruvate carboxyltransferase domain occupies Pro-39–Asn-313. Mg(2+) contacts are provided by Asp-48, His-252, His-254, and Asn-288. The segment at Val-445 to Arg-572 is regulatory domain.

The protein belongs to the alpha-IPM synthase/homocitrate synthase family. LeuA type 2 subfamily. In terms of assembly, homodimer. Mg(2+) is required as a cofactor.

The protein localises to the cytoplasm. It carries out the reaction 3-methyl-2-oxobutanoate + acetyl-CoA + H2O = (2S)-2-isopropylmalate + CoA + H(+). Its pathway is amino-acid biosynthesis; L-leucine biosynthesis; L-leucine from 3-methyl-2-oxobutanoate: step 1/4. Catalyzes the condensation of the acetyl group of acetyl-CoA with 3-methyl-2-oxobutanoate (2-ketoisovalerate) to form 3-carboxy-3-hydroxy-4-methylpentanoate (2-isopropylmalate). The sequence is that of 2-isopropylmalate synthase from Azoarcus sp. (strain BH72).